The sequence spans 273 residues: Glutamate racemase (273 aa).

Substrate contacts are provided by residues 9-10 (DS) and 41-42 (YG). C73 acts as the Proton donor/acceptor in catalysis. 74–75 (NT) lines the substrate pocket. C183 (proton donor/acceptor) is an active-site residue. 184 to 185 (TH) lines the substrate pocket.

The protein belongs to the aspartate/glutamate racemases family.

It carries out the reaction L-glutamate = D-glutamate. The protein operates within cell wall biogenesis; peptidoglycan biosynthesis. Functionally, provides the (R)-glutamate required for cell wall biosynthesis. In Shewanella sp. (strain ANA-3), this protein is Glutamate racemase.